The chain runs to 291 residues: Nitrogenase iron protein 1 (291 aa).

An ATP-binding site is contributed by 10 to 17 (GKGGIGKS). Position 98 (cysteine 98) interacts with [4Fe-4S] cluster. Residue arginine 101 is modified to ADP-ribosylarginine; by dinitrogenase reductase ADP-ribosyltransferase. Cysteine 133 is a [4Fe-4S] cluster binding site.

The protein belongs to the NifH/BchL/ChlL family. Homodimer. The cofactor is [4Fe-4S] cluster. The reversible ADP-ribosylation of Arg-101 inactivates the nitrogenase reductase and regulates nitrogenase activity.

The catalysed reaction is N2 + 8 reduced [2Fe-2S]-[ferredoxin] + 16 ATP + 16 H2O = H2 + 8 oxidized [2Fe-2S]-[ferredoxin] + 2 NH4(+) + 16 ADP + 16 phosphate + 6 H(+). Functionally, the key enzymatic reactions in nitrogen fixation are catalyzed by the nitrogenase complex, which has 2 components: the iron protein (component 2) and a component 1 which is either a molybdenum-iron protein, a vanadium-iron, or an iron-iron protein. This is Nitrogenase iron protein 1 (nifH1) from Azotobacter chroococcum mcd 1.